Consider the following 904-residue polypeptide: DNA mismatch repair protein MutS (904 aa).

638 to 645 (GPNMAGKS) lines the ATP pocket. A disordered region spans residues 825–869 (KSKADGTRRPASYHEAQPLLPGMPEPPSTASAEPPQTVTPPEPPV).

It belongs to the DNA mismatch repair MutS family.

Its function is as follows. This protein is involved in the repair of mismatches in DNA. It is possible that it carries out the mismatch recognition step. This protein has a weak ATPase activity. This Oleidesulfovibrio alaskensis (strain ATCC BAA-1058 / DSM 17464 / G20) (Desulfovibrio alaskensis) protein is DNA mismatch repair protein MutS.